A 396-amino-acid chain; its full sequence is Ornithine aminotransferase 2 (396 aa).

Lys-255 carries the post-translational modification N6-(pyridoxal phosphate)lysine.

Belongs to the class-III pyridoxal-phosphate-dependent aminotransferase family. OAT subfamily. The cofactor is pyridoxal 5'-phosphate.

It is found in the cytoplasm. The enzyme catalyses a 2-oxocarboxylate + L-ornithine = L-glutamate 5-semialdehyde + an L-alpha-amino acid. Its pathway is amino-acid biosynthesis; L-proline biosynthesis; L-glutamate 5-semialdehyde from L-ornithine: step 1/1. Catalyzes the interconversion of ornithine to glutamate semialdehyde. In Staphylococcus aureus (strain MRSA252), this protein is Ornithine aminotransferase 2.